A 187-amino-acid chain; its full sequence is MSNEEQQQPNPAAQAPEGAVTEGAAPEFNPAVLLKQLEEAQAQAQEHFDKALRTQAEMENLRKRTARDVENARKFALEKFAGELLAVRDSLEMGLDAARGETDVEKIREGTELTLKMLAQVMEKFGVEAVDPQGQRFDPDRHQAMSMQPNAELEPNTVMAVLQKGYLLNDRLLRPAMVVVSKAPEGE.

Residues 1 to 17 are compositionally biased toward low complexity; sequence MSNEEQQQPNPAAQAPE. The disordered stretch occupies residues 1-27; it reads MSNEEQQQPNPAAQAPEGAVTEGAAPE.

It belongs to the GrpE family. As to quaternary structure, homodimer.

The protein localises to the cytoplasm. Functionally, participates actively in the response to hyperosmotic and heat shock by preventing the aggregation of stress-denatured proteins, in association with DnaK and GrpE. It is the nucleotide exchange factor for DnaK and may function as a thermosensor. Unfolded proteins bind initially to DnaJ; upon interaction with the DnaJ-bound protein, DnaK hydrolyzes its bound ATP, resulting in the formation of a stable complex. GrpE releases ADP from DnaK; ATP binding to DnaK triggers the release of the substrate protein, thus completing the reaction cycle. Several rounds of ATP-dependent interactions between DnaJ, DnaK and GrpE are required for fully efficient folding. The sequence is that of Protein GrpE from Thioalkalivibrio sulfidiphilus (strain HL-EbGR7).